Consider the following 511-residue polypeptide: Inner membrane ABC transporter permease protein YnjC (511 aa).

Residues 1–8 (MATPLRYA) lie on the Cytoplasmic side of the membrane. The chain crosses the membrane as a helical span at residues 9–29 (LIFLLWAMVAVIYAPLIPAAL). The Periplasmic portion of the chain corresponds to 30 to 62 (TLISPALSLTHWQALFADPQLPQALLATLVSTT). One can recognise an ABC transmembrane type-1 1 domain in the interval 54-255 (LLATLVSTTI…MLLLAAYVLL (202 aa)). A helical transmembrane segment spans residues 63-83 (IAAVGALLIALLVIVALWPGP). Residues 84-91 (KWQRMCAR) are Cytoplasmic-facing. A helical membrane pass occupies residues 92–112 (LPWLLAIPHVAFATSALLLFA). The Periplasmic segment spans residues 113-130 (DGGLLYDYFPYFTPPMDR). The helical transmembrane segment at 131–151 (FGIGLGLTLAVKESAFLLWIL) threads the bilayer. Topologically, residues 152–189 (AAVLSEKWLLQQVIVLDSLGYSRWQCLNWLLLPSVAPA) are cytoplasmic. Residues 190-210 (LAMAMLAIVAWSLSVVDVAII) traverse the membrane as a helical segment. Topologically, residues 211 to 239 (LGPGNPPTLAVISWQWLTQGDIDQQTKGA) are periplasmic. Residues 240 to 260 (LASLLLMLLLAAYVLLSYLLW) traverse the membrane as a helical segment. Over 261–284 (RSWRRTIPRVDGVRKPATPLLPGN) the chain is Cytoplasmic. The chain crosses the membrane as a helical span at residues 285–305 (TLAIFLPLTGVLCVVLLAILA). Residues 306–318 (DQSTINSEALINS) are Periplasmic-facing. The region spanning 315 to 496 (LINSLTMGLV…LLPLIIFALT (182 aa)) is the ABC transmembrane type-1 2 domain. Residues 319 to 339 (LTMGLVATFIALLLLLLWLEW) traverse the membrane as a helical segment. Residues 340-345 (GPQRRQ) are Cytoplasmic-facing. The chain crosses the membrane as a helical span at residues 346-366 (LWLWLPILLPALPLVAGQYTL). Over 367–374 (ALWLKLDG) the chain is Periplasmic. The chain crosses the membrane as a helical span at residues 375-395 (SWTAVVWGHLLWVMPWMLFIL). Residues 396–432 (QPAWQRIDSRLILIAQTLGWSRAKIFFYVKCPLMLRP) lie on the Cytoplasmic side of the membrane. A helical membrane pass occupies residues 433 to 453 (VLIAFAVGFAVGIAQYMPTLW). Residues 454 to 485 (LGAGRFPTLTTEAVALSSGGSNGILAAQALWQ) are Periplasmic-facing. Residues 486-506 (LLLPLIIFALTALVAKWVGYV) form a helical membrane-spanning segment. The Cytoplasmic segment spans residues 507–511 (RQGLR).

This sequence belongs to the binding-protein-dependent transport system permease family.

It localises to the cell inner membrane. Functionally, probably part of the binding-protein-dependent transport system YnjCD. Probably responsible for the translocation of the substrate across the membrane. The chain is Inner membrane ABC transporter permease protein YnjC (ynjC) from Escherichia coli (strain K12).